Reading from the N-terminus, the 1555-residue chain is Probable serine/threonine-protein kinase DDB_G0276181 (1555 aa).

Disordered stretches follow at residues 1-54 (MTSV…NNSF), 138-208 (IIQQ…NSKL), 342-452 (KLKK…DSPF), 486-508 (TTTT…IKPL), and 781-850 (NNIN…NQNT). Low complexity-rich tracts occupy residues 14–53 (NNSG…NNNS), 138–205 (IIQQ…NNNN), 359–378 (SNIA…KING), and 395–431 (NNSQ…SKKP). The region spanning 58-238 (QVLHTGYLTK…WIEMIKLAIS (181 aa)) is the PH domain. Residues 437–452 (RNISTSDNGSGTDSPF) show a composition bias toward polar residues. 2 stretches are compositionally biased toward low complexity: residues 486 to 504 (TTTT…TNTN) and 781 to 832 (NNIN…NNNN). Over residues 833 to 850 (GSGLLSSSPLITISNQNT) the composition is skewed to polar residues. The Protein kinase domain occupies 986 to 1309 (VVLHERLGTG…TIIHSISKMI (324 aa)). ATP is bound at residue 992-1000 (LGTGATGDI). Residues 1012–1031 (RHISNQDSSGSNSSGSGSGH) are disordered. Lys1061 contacts ATP. Asp1156 serves as the catalytic Proton acceptor. Residues 1340-1376 (VQNNNNNSNNNNNNNNNNNNNNSNSNLNNCNNSSPNL) show a composition bias toward low complexity. 2 disordered regions span residues 1340–1383 (VQNN…SANN) and 1457–1480 (KKSS…GSSR).

This sequence belongs to the protein kinase superfamily. TKL Ser/Thr protein kinase family.

The catalysed reaction is L-seryl-[protein] + ATP = O-phospho-L-seryl-[protein] + ADP + H(+). The enzyme catalyses L-threonyl-[protein] + ATP = O-phospho-L-threonyl-[protein] + ADP + H(+). This Dictyostelium discoideum (Social amoeba) protein is Probable serine/threonine-protein kinase DDB_G0276181.